The primary structure comprises 429 residues: Enolase (429 aa).

A (2R)-2-phosphoglycerate-binding site is contributed by Q164. Catalysis depends on E206, which acts as the Proton donor. Mg(2+) is bound by residues D243, E286, and D313. (2R)-2-phosphoglycerate contacts are provided by K338, R367, S368, and K389. K338 serves as the catalytic Proton acceptor.

This sequence belongs to the enolase family. The cofactor is Mg(2+).

Its subcellular location is the cytoplasm. It localises to the secreted. The protein localises to the cell surface. It carries out the reaction (2R)-2-phosphoglycerate = phosphoenolpyruvate + H2O. Its pathway is carbohydrate degradation; glycolysis; pyruvate from D-glyceraldehyde 3-phosphate: step 4/5. In terms of biological role, catalyzes the reversible conversion of 2-phosphoglycerate (2-PG) into phosphoenolpyruvate (PEP). It is essential for the degradation of carbohydrates via glycolysis. In Thermotoga sp. (strain RQ2), this protein is Enolase.